The primary structure comprises 422 residues: Ribonuclease Y (422 aa).

One can recognise a KH domain in the interval 112 to 172; the sequence is TTNIVKLPSD…IRREIATRTL (61 aa). The region spanning 238–331 is the HD domain; sequence VLAHSIEVAK…VAIADSISAS (94 aa).

This sequence belongs to the RNase Y family.

In terms of biological role, endoribonuclease that initiates mRNA decay. The sequence is that of Ribonuclease Y from Mycoplasma mycoides.